A 133-amino-acid chain; its full sequence is MQPLRFLVLSPSGIKLDQAIISAQVKTTNGYLGLNYNRAPLIAAVQSHFCKILFANNTRRNAIIGAGLVLIKKTEAKIFTENFVFEDEIDLEATLKRKAELERQMNHSKDLKLNIKIEQNLMFELLKLSNKQR.

The protein belongs to the ATPase epsilon chain family. As to quaternary structure, F-type ATPases have 2 components, CF(1) - the catalytic core - and CF(0) - the membrane proton channel. CF(1) has five subunits: alpha(3), beta(3), gamma(1), delta(1), epsilon(1). CF(0) has three main subunits: a, b and c.

It is found in the cell membrane. Its function is as follows. Produces ATP from ADP in the presence of a proton gradient across the membrane. This Mycoplasma pneumoniae (strain ATCC 29342 / M129 / Subtype 1) (Mycoplasmoides pneumoniae) protein is ATP synthase epsilon chain (atpC).